The primary structure comprises 485 residues: Protein nucleotidyltransferase YdiU (485 aa).

G90, G92, R93, K113, D125, G126, R176, and R183 together coordinate ATP. D252 acts as the Proton acceptor in catalysis. Residues N253 and D262 each contribute to the Mg(2+) site. D262 serves as a coordination point for ATP.

It belongs to the SELO family. Requires Mg(2+) as cofactor. Mn(2+) is required as a cofactor.

The enzyme catalyses L-seryl-[protein] + ATP = 3-O-(5'-adenylyl)-L-seryl-[protein] + diphosphate. It carries out the reaction L-threonyl-[protein] + ATP = 3-O-(5'-adenylyl)-L-threonyl-[protein] + diphosphate. The catalysed reaction is L-tyrosyl-[protein] + ATP = O-(5'-adenylyl)-L-tyrosyl-[protein] + diphosphate. It catalyses the reaction L-histidyl-[protein] + UTP = N(tele)-(5'-uridylyl)-L-histidyl-[protein] + diphosphate. The enzyme catalyses L-seryl-[protein] + UTP = O-(5'-uridylyl)-L-seryl-[protein] + diphosphate. It carries out the reaction L-tyrosyl-[protein] + UTP = O-(5'-uridylyl)-L-tyrosyl-[protein] + diphosphate. In terms of biological role, nucleotidyltransferase involved in the post-translational modification of proteins. It can catalyze the addition of adenosine monophosphate (AMP) or uridine monophosphate (UMP) to a protein, resulting in modifications known as AMPylation and UMPylation. This chain is Protein nucleotidyltransferase YdiU, found in Aliivibrio fischeri (strain MJ11) (Vibrio fischeri).